A 459-amino-acid polypeptide reads, in one-letter code: Protein FAM90A27P (459 aa).

A compositionally biased stretch (basic residues) spans 1–10 (MARHSVHHQA). Disordered regions lie at residues 1 to 41 (MARH…ESRV), 74 to 136 (SHKE…WKEP), 153 to 239 (HTTK…ALQP), and 259 to 459 (PDAD…SDSD). A compositionally biased stretch (basic and acidic residues) spans 125–136 (PQEKMQEAWKEP). Residues 184 to 194 (HNDSPQLSTCG) are compositionally biased toward polar residues. Residues 341-353 (KATAETAATKTAT) show a composition bias toward low complexity. Residues 415–427 (PPENSASAQSPRF) show a composition bias toward polar residues.

It belongs to the FAM90 family.

This chain is Protein FAM90A27P (FAM90A27P), found in Homo sapiens (Human).